We begin with the raw amino-acid sequence, 273 residues long: Ribosomal RNA small subunit methyltransferase A (273 aa).

6 residues coordinate S-adenosyl-L-methionine: N18, L20, G45, E66, D91, and N113.

It belongs to the class I-like SAM-binding methyltransferase superfamily. rRNA adenine N(6)-methyltransferase family. RsmA subfamily.

It localises to the cytoplasm. The catalysed reaction is adenosine(1518)/adenosine(1519) in 16S rRNA + 4 S-adenosyl-L-methionine = N(6)-dimethyladenosine(1518)/N(6)-dimethyladenosine(1519) in 16S rRNA + 4 S-adenosyl-L-homocysteine + 4 H(+). In terms of biological role, specifically dimethylates two adjacent adenosines (A1518 and A1519) in the loop of a conserved hairpin near the 3'-end of 16S rRNA in the 30S particle. May play a critical role in biogenesis of 30S subunits. The protein is Ribosomal RNA small subunit methyltransferase A of Salmonella schwarzengrund (strain CVM19633).